Here is a 257-residue protein sequence, read N- to C-terminus: Imidazole glycerol phosphate synthase subunit HisF (257 aa).

Catalysis depends on residues Asp-12 and Asp-131.

The protein belongs to the HisA/HisF family. In terms of assembly, heterodimer of HisH and HisF.

The protein resides in the cytoplasm. It catalyses the reaction 5-[(5-phospho-1-deoxy-D-ribulos-1-ylimino)methylamino]-1-(5-phospho-beta-D-ribosyl)imidazole-4-carboxamide + L-glutamine = D-erythro-1-(imidazol-4-yl)glycerol 3-phosphate + 5-amino-1-(5-phospho-beta-D-ribosyl)imidazole-4-carboxamide + L-glutamate + H(+). Its pathway is amino-acid biosynthesis; L-histidine biosynthesis; L-histidine from 5-phospho-alpha-D-ribose 1-diphosphate: step 5/9. Functionally, IGPS catalyzes the conversion of PRFAR and glutamine to IGP, AICAR and glutamate. The HisF subunit catalyzes the cyclization activity that produces IGP and AICAR from PRFAR using the ammonia provided by the HisH subunit. The protein is Imidazole glycerol phosphate synthase subunit HisF of Rhodococcus erythropolis (strain PR4 / NBRC 100887).